A 187-amino-acid chain; its full sequence is Protein GrpE (187 aa).

Residues 1–23 form a disordered region; that stretch reads MADEQNLDAQAQDQAAEAGAGEE. Residues 7-23 are compositionally biased toward low complexity; the sequence is LDAQAQDQAAEAGAGEE.

The protein belongs to the GrpE family. In terms of assembly, homodimer.

The protein resides in the cytoplasm. In terms of biological role, participates actively in the response to hyperosmotic and heat shock by preventing the aggregation of stress-denatured proteins, in association with DnaK and GrpE. It is the nucleotide exchange factor for DnaK and may function as a thermosensor. Unfolded proteins bind initially to DnaJ; upon interaction with the DnaJ-bound protein, DnaK hydrolyzes its bound ATP, resulting in the formation of a stable complex. GrpE releases ADP from DnaK; ATP binding to DnaK triggers the release of the substrate protein, thus completing the reaction cycle. Several rounds of ATP-dependent interactions between DnaJ, DnaK and GrpE are required for fully efficient folding. The chain is Protein GrpE from Pseudomonas savastanoi pv. phaseolicola (strain 1448A / Race 6) (Pseudomonas syringae pv. phaseolicola (strain 1448A / Race 6)).